Here is a 185-residue protein sequence, read N- to C-terminus: Crossover junction endodeoxyribonuclease RuvC (185 aa).

Catalysis depends on residues aspartate 7, glutamate 68, and aspartate 141. Mg(2+) is bound by residues aspartate 7, glutamate 68, and aspartate 141.

This sequence belongs to the RuvC family. As to quaternary structure, homodimer which binds Holliday junction (HJ) DNA. The HJ becomes 2-fold symmetrical on binding to RuvC with unstacked arms; it has a different conformation from HJ DNA in complex with RuvA. In the full resolvosome a probable DNA-RuvA(4)-RuvB(12)-RuvC(2) complex forms which resolves the HJ. The cofactor is Mg(2+).

It is found in the cytoplasm. The catalysed reaction is Endonucleolytic cleavage at a junction such as a reciprocal single-stranded crossover between two homologous DNA duplexes (Holliday junction).. Its function is as follows. The RuvA-RuvB-RuvC complex processes Holliday junction (HJ) DNA during genetic recombination and DNA repair. Endonuclease that resolves HJ intermediates. Cleaves cruciform DNA by making single-stranded nicks across the HJ at symmetrical positions within the homologous arms, yielding a 5'-phosphate and a 3'-hydroxyl group; requires a central core of homology in the junction. The consensus cleavage sequence is 5'-(A/T)TT(C/G)-3'. Cleavage occurs on the 3'-side of the TT dinucleotide at the point of strand exchange. HJ branch migration catalyzed by RuvA-RuvB allows RuvC to scan DNA until it finds its consensus sequence, where it cleaves and resolves the cruciform DNA. This Helicobacter hepaticus (strain ATCC 51449 / 3B1) protein is Crossover junction endodeoxyribonuclease RuvC.